Reading from the N-terminus, the 555-residue chain is CTP synthase (555 aa).

The segment at 1–271 (MVKRGKKTKY…DDKLAELFNI (271 aa)) is amidoligase domain. Position 19 (S19) interacts with CTP. S19 provides a ligand contact to UTP. ATP is bound by residues 20–25 (SLGKGL) and D77. Mg(2+)-binding residues include D77 and E145. Residues 152–154 (DIE), 192–197 (KTKPTQ), and K228 each bind CTP. UTP is bound by residues 192–197 (KTKPTQ) and K228. A Glutamine amidotransferase type-1 domain is found at 297–537 (RIGIVGKYVE…VKAALEHRDA (241 aa)). G358 provides a ligand contact to L-glutamine. The Nucleophile; for glutamine hydrolysis role is filled by C385. L-glutamine-binding positions include 386 to 389 (LGLQ), E409, and R466. Active-site residues include H510 and E512. The tract at residues 535 to 555 (RDAQQRQPPAEVKKLAVGKNG) is disordered.

It belongs to the CTP synthase family. Homotetramer.

It catalyses the reaction UTP + L-glutamine + ATP + H2O = CTP + L-glutamate + ADP + phosphate + 2 H(+). The catalysed reaction is L-glutamine + H2O = L-glutamate + NH4(+). The enzyme catalyses UTP + NH4(+) + ATP = CTP + ADP + phosphate + 2 H(+). It functions in the pathway pyrimidine metabolism; CTP biosynthesis via de novo pathway; CTP from UDP: step 2/2. Its activity is regulated as follows. Allosterically activated by GTP, when glutamine is the substrate; GTP has no effect on the reaction when ammonia is the substrate. The allosteric effector GTP functions by stabilizing the protein conformation that binds the tetrahedral intermediate(s) formed during glutamine hydrolysis. Inhibited by the product CTP, via allosteric rather than competitive inhibition. Functionally, catalyzes the ATP-dependent amination of UTP to CTP with either L-glutamine or ammonia as the source of nitrogen. Regulates intracellular CTP levels through interactions with the four ribonucleotide triphosphates. The polypeptide is CTP synthase (Anaeromyxobacter dehalogenans (strain 2CP-1 / ATCC BAA-258)).